The primary structure comprises 283 residues: ATP phosphoribosyltransferase (283 aa).

The protein belongs to the ATP phosphoribosyltransferase family. Long subfamily. Requires Mg(2+) as cofactor.

The protein resides in the cytoplasm. The catalysed reaction is 1-(5-phospho-beta-D-ribosyl)-ATP + diphosphate = 5-phospho-alpha-D-ribose 1-diphosphate + ATP. Its pathway is amino-acid biosynthesis; L-histidine biosynthesis; L-histidine from 5-phospho-alpha-D-ribose 1-diphosphate: step 1/9. With respect to regulation, feedback inhibited by histidine. Functionally, catalyzes the condensation of ATP and 5-phosphoribose 1-diphosphate to form N'-(5'-phosphoribosyl)-ATP (PR-ATP). Has a crucial role in the pathway because the rate of histidine biosynthesis seems to be controlled primarily by regulation of HisG enzymatic activity. The sequence is that of ATP phosphoribosyltransferase from Ignicoccus hospitalis (strain KIN4/I / DSM 18386 / JCM 14125).